The following is a 795-amino-acid chain: Cyclin-dependent kinase 11B (795 aa).

Residues 17–60 (LQEKKRRKEQEEKAEIKRLKNSDDRDSKRDSLEEGELRDHRMEI) are compositionally biased toward basic and acidic residues. The tract at residues 17-412 (LQEKKRRKEQ…EGDYVPDSPA (396 aa)) is disordered. S47 and S72 each carry phosphoserine. The span at 95 to 113 (EKAHHRKDEKRKEKRRHRS) shows a compositional bias: basic residues. Composition is skewed to basic and acidic residues over residues 114-131 (HSAE…EREH), 138-227 (REEQ…DKVK), 238-253 (PPRE…KPGE), and 264-276 (QLKE…RDLL). S115 carries the post-translational modification Phosphoserine. Phosphoserine is present on S283. Over residues 291-302 (SAESSSAESGSG) the composition is skewed to low complexity. Acidic residues-rich tracts occupy residues 303-364 (SEEE…EERE) and 383-392 (ESEEAEEEVG). In terms of domain architecture, Protein kinase spans 438 to 723 (FQCLNRIEEG…AEDGLKHEYF (286 aa)). ATP-binding positions include 444-452 (IEEGTYGVV) and K467. The residue at position 482 (S482) is a Phosphoserine; by CDK7. A Phosphothreonine; by CDK7 modification is found at T488. Catalysis depends on D562, which acts as the Proton acceptor. Phosphoserine is present on S589. Y594 is subject to Phosphotyrosine. Phosphothreonine is present on T595. K641 is covalently cross-linked (Glycyl lysine isopeptide (Lys-Gly) (interchain with G-Cter in SUMO2)). Residues 733 to 795 (SMFPTWPAKS…AAGPGFSLKF (63 aa)) are disordered. At T751 the chain carries Phosphothreonine. At S752 the chain carries Phosphoserine.

Belongs to the protein kinase superfamily. CMGC Ser/Thr protein kinase family. CDC2/CDKX subfamily. Cleaved isoform SV9 (p110C) binds to the serine/threonine kinase PAK1 and RANBP9. p110C interacts with RNPS1. Isoform 7, but not isoform SV9, nor its cleavage product p110C, interacts with CCND3. Interacts with CCNL1 and CCNL2. Forms complexes with pre-mRNA-splicing factors, including at least SRSF1, SRSF2 and SRSF7/SLU7. Interacts with isoform 5 of MYO18A. In terms of assembly, (Microbial infection) Interacts with human herpes virus 1 (HHV-1) transcriptional regulator ICP22. Mg(2+) is required as a cofactor. During FAS- or TNF-induced apoptosis, isoform SV9 is cleaved by caspases to produce p110C, a fragment that contains the C-terminal kinase domain. In terms of processing, phosphorylation at Ser-115 creates a binding site for 14-3-3 proteins. p110C can be autophosphorylated. Expressed ubiquitously. Some evidence of isoform-specific tissue distribution.

The protein localises to the cytoplasm. The protein resides in the nucleus. It catalyses the reaction L-seryl-[protein] + ATP = O-phospho-L-seryl-[protein] + ADP + H(+). It carries out the reaction L-threonyl-[protein] + ATP = O-phospho-L-threonyl-[protein] + ADP + H(+). Phosphorylation at Thr-448 or Tyr-449 inactivates the enzyme, while phosphorylation at Thr-595 activates it. Its function is as follows. Plays multiple roles in cell cycle progression, cytokinesis and apoptosis. Involved in pre-mRNA splicing in a kinase activity-dependent manner. Isoform 7 may act as a negative regulator of normal cell cycle progression. The protein is Cyclin-dependent kinase 11B (CDK11B) of Homo sapiens (Human).